Consider the following 488-residue polypeptide: Probable aldehyde dehydrogenase (488 aa).

240-245 (GSSVTG) lines the NAD(+) pocket. Active-site residues include Glu-262 and Cys-296.

It belongs to the aldehyde dehydrogenase family.

The catalysed reaction is an aldehyde + NAD(+) + H2O = a carboxylate + NADH + 2 H(+). Its function is as follows. Involved in an alpha-terpineol oxidation system. This Pseudomonas sp protein is Probable aldehyde dehydrogenase (terPE).